A 330-amino-acid chain; its full sequence is Probable ADP,ATP carrier protein At5g56450 (330 aa).

A compositionally biased stretch (acidic residues) spans 1–10; it reads MCISKEDEED. A disordered region spans residues 1–22; sequence MCISKEDEEDPSRNRRNQSPLS. 6 helical membrane passes run 27-61, 103-127, 137-171, 203-230, 236-270, and 300-325; these read LKHF…LQTQ, GSSV…RSIL, IFSG…RLAA, GLPA…EIFS, ELAL…IMMQ, and GALS…KRFL. Solcar repeat units follow at residues 28-126, 139-228, and 241-324; these read KHFQ…YRSI, SGAL…VKEI, and KRWG…VKRF. Residues R108 and K120 each contribute to the ADP site. An ADP-binding site is contributed by R264. Positions 264–269 match the Substrate recognition motif; it reads RRRIMM.

It belongs to the mitochondrial carrier (TC 2.A.29) family. As to quaternary structure, monomer.

It localises to the membrane. It carries out the reaction ADP(in) + ATP(out) = ADP(out) + ATP(in). ADP:ATP antiporter that catalyzes the exchange of ADP and ATP across the membrane. The protein is Probable ADP,ATP carrier protein At5g56450 of Arabidopsis thaliana (Mouse-ear cress).